Consider the following 464-residue polypeptide: Gamma-aminobutyric acid receptor subunit alpha-5 (464 aa).

An N-terminal signal peptide occupies residues 1–25 (MDNGMLSRFIMTKTLLVFCISMTLS). At 26 to 260 (SHFGFSQMPT…FHLKRKIGYF (235 aa)) the chain is on the extracellular side. Asparagine 45 carries N-linked (GlcNAc...) asparagine glycosylation. Arginine 101 provides a ligand contact to 4-aminobutanoate. A glycan (N-linked (GlcNAc...) asparagine) is linked at asparagine 145. Threonine 164 contacts 4-aminobutanoate. Residues cysteine 173 and cysteine 187 are joined by a disulfide bond. N-linked (GlcNAc...) asparagine glycans are attached at residues asparagine 207 and asparagine 236. Transmembrane regions (helical) follow at residues 261–281 (VIQT…SFWL), 287–308 (PART…ISAR), and 319–340 (AMDW…EFAT). The Cytoplasmic portion of the chain corresponds to 341-429 (VNYFTKRGWA…TYNSISKIDK (89 aa)). Residue lysine 355 forms a Glycyl lysine isopeptide (Lys-Gly) (interchain with G-Cter in ubiquitin) linkage. Residues 382–414 (KLTHPPNIPKEQLPGGTGNAVGTASIRASEEKT) form a disordered region. A helical membrane pass occupies residues 430–450 (MSRIVFPILFGTFNLVYWATY).

It belongs to the ligand-gated ion channel (TC 1.A.9) family. Gamma-aminobutyric acid receptor (TC 1.A.9.5) subfamily. GABRA5 sub-subfamily. As to quaternary structure, heteropentamer, formed by a combination of alpha (GABRA1-6), beta (GABRB1-3), gamma (GABRG1-3), delta (GABRD), epsilon (GABRE), rho (GABRR1-3), pi (GABRP) and theta (GABRQ) chains, each subunit exhibiting distinct physiological and pharmacological properties. As to expression, expressed in brain areas such as cerebral cortex, hippocampal formation and olfactory bulb granular layer.

It localises to the postsynaptic cell membrane. It is found in the cell membrane. It catalyses the reaction chloride(in) = chloride(out). Allosterically potentiated by alphaxalone. Allosterically inhibited by pregnenolone sulfate. Inhibited by zinc and lanthanum. Alpha subunit of the heteropentameric ligand-gated chloride channel gated by gamma-aminobutyric acid (GABA), a major inhibitory neurotransmitter in the brain. GABA-gated chloride channels, also named GABA(A) receptors (GABAAR), consist of five subunits arranged around a central pore and contain GABA active binding site(s) located at the alpha and beta subunit interface(s). When activated by GABA, GABAARs selectively allow the flow of chloride anions across the cell membrane down their electrochemical gradient. GABAARs containing alpha-5/GABRA5 subunits are mainly extrasynaptic and contribute to the tonic GABAergic inhibition in the hippocampus. Extrasynaptic alpha-5-containing GABAARs in CA1 pyramidal neurons play a role in learning and memory processes. In Rattus norvegicus (Rat), this protein is Gamma-aminobutyric acid receptor subunit alpha-5.